We begin with the raw amino-acid sequence, 437 residues long: Adenylosuccinate synthetase (437 aa).

GTP contacts are provided by residues 12–18 and 40–42; these read GDEGKGK and GHT. The active-site Proton acceptor is the Asp13. Mg(2+) contacts are provided by Asp13 and Gly40. Residues 13–16, 38–41, Thr128, Arg142, Gln223, Thr238, and Arg302 each bind IMP; these read DEGK and NAGH. His41 functions as the Proton donor in the catalytic mechanism. 298 to 304 contacts substrate; the sequence is TTTGRRR. GTP-binding positions include Arg304, 330–332, and 412–414; these read KLD and SLG.

It belongs to the adenylosuccinate synthetase family. As to quaternary structure, homodimer. Requires Mg(2+) as cofactor.

Its subcellular location is the cytoplasm. It catalyses the reaction IMP + L-aspartate + GTP = N(6)-(1,2-dicarboxyethyl)-AMP + GDP + phosphate + 2 H(+). Its pathway is purine metabolism; AMP biosynthesis via de novo pathway; AMP from IMP: step 1/2. In terms of biological role, plays an important role in the de novo pathway of purine nucleotide biosynthesis. Catalyzes the first committed step in the biosynthesis of AMP from IMP. This is Adenylosuccinate synthetase from Prochlorococcus marinus (strain MIT 9211).